Consider the following 145-residue polypeptide: Large ribosomal subunit protein uL11 (145 aa).

The protein belongs to the universal ribosomal protein uL11 family. In terms of assembly, part of the ribosomal stalk of the 50S ribosomal subunit. Interacts with L10 and the large rRNA to form the base of the stalk. L10 forms an elongated spine to which L12 dimers bind in a sequential fashion forming a multimeric L10(L12)X complex. One or more lysine residues are methylated.

Functionally, forms part of the ribosomal stalk which helps the ribosome interact with GTP-bound translation factors. The protein is Large ribosomal subunit protein uL11 of Corynebacterium glutamicum (strain ATCC 13032 / DSM 20300 / JCM 1318 / BCRC 11384 / CCUG 27702 / LMG 3730 / NBRC 12168 / NCIMB 10025 / NRRL B-2784 / 534).